A 101-amino-acid chain; its full sequence is RNA-binding protein Hfq (101 aa).

One can recognise a Sm domain in the interval Asp9–Val68. Positions Val63–Glu101 are disordered. The span at His70–Asn86 shows a compositional bias: polar residues.

This sequence belongs to the Hfq family. In terms of assembly, homohexamer.

Its function is as follows. RNA chaperone that binds small regulatory RNA (sRNAs) and mRNAs to facilitate mRNA translational regulation in response to envelope stress, environmental stress and changes in metabolite concentrations. Also binds with high specificity to tRNAs. Positively regulates the expression of the yst gene for heat-stable enterotoxin (Y-ST). The chain is RNA-binding protein Hfq from Yersinia enterocolitica.